Consider the following 206-residue polypeptide: MARYLGPKLKLSRREGTDLFLKSGVRAIDSKCKLETPPGRHGARKTRLSEYGVQLREKQKVRRIYGVLEKQFRNYYKDAARQKGNTGENLLTLLETRLDNVVYRMGFGATRAESRQLVSHKSILVNGSVVNIPSFKVSASDVISIREKSKKQARISASLEVASQREKPTWVEVDNTKMEGAFKRLPERSDLSAEINEQLIVELCSK.

The region spanning 96 to 159 (TRLDNVVYRM…KKQARISASL (64 aa)) is the S4 RNA-binding domain.

Belongs to the universal ribosomal protein uS4 family. As to quaternary structure, part of the 30S ribosomal subunit. Contacts protein S5. The interaction surface between S4 and S5 is involved in control of translational fidelity.

Its function is as follows. One of the primary rRNA binding proteins, it binds directly to 16S rRNA where it nucleates assembly of the body of the 30S subunit. Functionally, with S5 and S12 plays an important role in translational accuracy. In Shewanella violacea, this protein is Small ribosomal subunit protein uS4.